The chain runs to 88 residues: Small ribosomal subunit protein bS16 (88 aa).

Belongs to the bacterial ribosomal protein bS16 family.

This chain is Small ribosomal subunit protein bS16, found in Geotalea daltonii (strain DSM 22248 / JCM 15807 / FRC-32) (Geobacter daltonii).